The sequence spans 182 residues: R-phycoerythrin subunit beta (182 aa).

(2R,3E)-phycoerythrobilin is bound at residue Cys-82.

The protein belongs to the phycobiliprotein family. In terms of assembly, homodimer. Post-translationally, contains one covalently linked phycoerythrobilin chromophore.

Green-light absorbing phycoerythrin of unknown function. The sequence is that of R-phycoerythrin subunit beta (cpeB) from Prochlorococcus marinus (strain SARG / CCMP1375 / SS120).